Here is a 682-residue protein sequence, read N- to C-terminus: Potassium-transporting ATPase ATP-binding subunit (682 aa).

4 consecutive transmembrane segments (helical) span residues 34 to 54, 58 to 78, 219 to 239, and 254 to 274; these read PVMF…LAMV, IAGS…TVLF, IALT…TATL, and VLVA…LSAI. Asp307 (4-aspartylphosphate intermediate) is an active-site residue. Residues Asp344, Glu348, 377–384, and Lys395 each bind ATP; that span reads FTAQSRMS. Mg(2+)-binding residues include Asp518 and Asp522. Transmembrane regions (helical) follow at residues 588–608, 616–636, and 662–682; these read FAII…LNVM, AILS…PLAL, and LVVP…LGLA.

It belongs to the cation transport ATPase (P-type) (TC 3.A.3) family. Type IA subfamily. In terms of assembly, the system is composed of three essential subunits: KdpA, KdpB and KdpC.

The protein resides in the cell inner membrane. It catalyses the reaction K(+)(out) + ATP + H2O = K(+)(in) + ADP + phosphate + H(+). In terms of biological role, part of the high-affinity ATP-driven potassium transport (or Kdp) system, which catalyzes the hydrolysis of ATP coupled with the electrogenic transport of potassium into the cytoplasm. This subunit is responsible for energy coupling to the transport system and for the release of the potassium ions to the cytoplasm. This is Potassium-transporting ATPase ATP-binding subunit from Salmonella enteritidis PT4 (strain P125109).